The primary structure comprises 140 residues: Large-conductance mechanosensitive channel (140 aa).

The next 3 membrane-spanning stretches (helical) occupy residues 7 to 27, 30 to 50, and 64 to 84; these read EFAFKGNVLDLAVAVVMGAAF, IITSLVTYIIMPLIGLIFGTV, and GLFVQSVIDFLIVAFALFLFV.

Belongs to the MscL family. As to quaternary structure, homopentamer.

It localises to the cell membrane. Functionally, channel that opens in response to stretch forces in the membrane lipid bilayer. May participate in the regulation of osmotic pressure changes within the cell. The chain is Large-conductance mechanosensitive channel from Staphylococcus carnosus (strain TM300).